The sequence spans 105 residues: MALRYPMAVGLNKGHKVTKNVGKPRHSRRRGRLTKHTKFVRDMIREVCGFAPYERRAMELLKVSKDKRALKFIKKRVGTHIRAKRKREELSNVLAAMRKAAAKKD.

N6-acetyllysine is present on lysine 62.

Belongs to the eukaryotic ribosomal protein eL36 family. As to quaternary structure, component of the large ribosomal subunit.

The protein resides in the cytoplasm. The protein localises to the cytosol. Its function is as follows. Component of the large ribosomal subunit. The ribosome is a large ribonucleoprotein complex responsible for the synthesis of proteins in the cell. This is Large ribosomal subunit protein eL36 (RPL36) from Bos taurus (Bovine).